The primary structure comprises 1648 residues: eIF-2-alpha kinase GCN2 (1648 aa).

Positions 1–26 are disordered; sequence MAGGRGASGRGRAEPQESYSQRQDHE. The RWD domain maps to 25–137; that stretch reads HELQALEAIY…HHVQSFLSEH (113 aa). The stretch at 146-205 forms a coiled coil; sequence HEEMLERQAQEKQQRLLEARRKEEQEQREILHEIQRRKEEIKEEKKRKEMAKQERLEITS. Serine 230 bears the Phosphoserine mark. Protein kinase domains follow at residues 286 to 538 and 589 to 1000; these read VGSD…HSFI and FEEL…SELL. ATP-binding positions include 595-603 and lysine 618; that span reads LGKGAFGAV. Positions 661–784 are disordered; the sequence is PAVPGTPPPD…CNQKDGSHEI (124 aa). The residue at position 666 (threonine 666) is a Phosphothreonine. Polar residues-rich tracts occupy residues 673 to 686 and 704 to 722; these read PQAQ…GKTS and LSSS…STRF. 2 stretches are compositionally biased toward acidic residues: residues 730-739 and 753-763; these read SSDEEDEDER and SDSDIIFDNED. Over residues 775–784 the composition is skewed to basic and acidic residues; sequence CNQKDGSHEI. Residue aspartate 846 is the Proton acceptor of the active site. At threonine 869 the chain carries Phosphothreonine. Phosphothreonine; by autocatalysis occurs at positions 898 and 903. The tract at residues 1021 to 1492 is histidyl-tRNA synthetase-like; sequence IDGKAYRTMM…DHVMQKLRTK (472 aa). Lysine 1258 carries the post-translational modification N6-acetyllysine.

The protein belongs to the protein kinase superfamily. Ser/Thr protein kinase family. GCN2 subfamily. Homodimer; homodimerization is important for kinase activation by uncharged tRNAs. Interacts with GCN1; this interaction stimulates EIF2AK4/GCN2 kinase activity and is impaired by IMPACT upon a variety of stress conditions, such as amino acid depletion, UV-C irradiation, proteasome inhibitor treatment and glucose deprivation. Interacts with DNAJC3; this interaction inhibits EIF2AK4/GCN2 kinase activity during endoplasmic reticulum (ER), hypothermic and amino acid-starving stress conditions. Interacts with MAP3K20; activates EIF2AK4/GCN2 kinase activity in response to moderate ribotoxic stress. Post-translationally, autophosphorylated; autophosphorylation on Thr-898 is increased upon amino acid starvation and in UV irradiation cells and inhibited in presence of IMPACT. Expressed in liver. Expressed predominantly in the hippocampal CA1 region and the dentate gyrus, and to a lesser degree in CA3 (at protein level). Expressed in liver, lung, brain, kidney, skeletal muscle and testis. Expressed weakly in heart and spleen. Expressed in the hippocampal CA1 and CA3 regions, the dentate gyrus and cerebellum. Isoform 1 is widely expressed. Isoform 1 is expressed in brain, liver, skeletal muscle and testis. Isoform 3 is expressed in lung, brain, testis, prostate and choroid plexus. Isoform 4 is expressed in muscle, lung, kidney, brain, testis and prostate.

It localises to the cytoplasm. The catalysed reaction is L-seryl-[protein] + ATP = O-phospho-L-seryl-[protein] + ADP + H(+). It carries out the reaction L-threonyl-[protein] + ATP = O-phospho-L-threonyl-[protein] + ADP + H(+). (Microbial infection) Kinase activity is enhanced by alphavirus genomic RNA sequences. Kinase activity is stimulated upon binding to uncharged tRNAs. Activated by serum starvation (in vitro). Its function is as follows. Metabolic-stress sensing protein kinase that phosphorylates the alpha subunit of eukaryotic translation initiation factor 2 (EIF2S1/eIF-2-alpha) in response to low amino acid availability. Plays a role as an activator of the integrated stress response (ISR) required for adaptation to amino acid starvation. EIF2S1/eIF-2-alpha phosphorylation in response to stress converts EIF2S1/eIF-2-alpha into a global protein synthesis inhibitor, leading to a global attenuation of cap-dependent translation, and thus to a reduced overall utilization of amino acids, while concomitantly initiating the preferential translation of ISR-specific mRNAs, such as the transcriptional activator ATF4, and hence allowing ATF4-mediated reprogramming of amino acid biosynthetic gene expression to alleviate nutrient depletion. Required for the translational induction of protein kinase PRKCH following amino acid starvation. Binds uncharged tRNAs. Involved in cell cycle arrest by promoting cyclin D1 mRNA translation repression after the unfolded protein response pathway (UPR) activation or cell cycle inhibitor CDKN1A/p21 mRNA translation activation in response to amino acid deprivation. Plays a role in the consolidation of synaptic plasticity, learning as well as formation of long-term memory. Plays a role in neurite outgrowth inhibition. Plays a role in feeding behavior to maintain amino acid homeostasis; contributes to the innate aversion toward diets of imbalanced amino acid composition. Plays a proapoptotic role in response to glucose deprivation. Promotes global cellular protein synthesis repression in response to UV irradiation independently of the stress-activated protein kinase/c-Jun N-terminal kinase (SAPK/JNK) and p38 MAPK signaling pathways. In terms of biological role, (Microbial infection) Plays a role in the antiviral response against alphavirus infection; impairs early viral mRNA translation of the incoming genomic virus RNA, thus preventing alphavirus replication. Functionally, (Microbial infection) Plays a role in modulating the adaptive immune response to Yellow fever virus infection; promotes dendritic cells to initiate autophagy and antigene presentation to both CD4(+) and CD8(+) T-cells under amino acid starvation. This chain is eIF-2-alpha kinase GCN2, found in Mus musculus (Mouse).